The primary structure comprises 299 residues: Kynurenine formamidase-like hydrolase fscH (299 aa).

Positions 48–52 match the HGGXW motif; that stretch reads HGGAW. Residues 90–110 form a disordered region; sequence SPRTPSQPVPSGGHVGGEQQA. Ser-142 (nucleophile) is an active-site residue.

The protein belongs to the kynurenine formamidase family.

Its pathway is secondary metabolite biosynthesis. Kynurenine formamidase-like hydrolase; part of the fragmented gene cluster that mediates the biosynthesis of fusarochromene, a tryptophan-derived metabolite closely related to a group of mycotoxins including fusarochromanone. Within the pathway, fscH converts the product of fscD into 4-hydroxykyrunenine. The first step of the pathway is the epimerization of L-tryptophan to D-tryptophan in the presence of the NRPS-like tryptophan epimerase fscC. D-tryptophan is subsequently hydroxylated by the tryptophan 6-hydroxylase fscE to yield 6-hydroxytryptophan. The pyrrole ring undergoes cleavaged by the tryptophan 2,3-dioxygenase fscD and is finally converted to 4-hydroxykyrunenine by the hydrolase fscH. The NRPS-like oxidoreductase fscA reduces the carboxyl group to primary alcohol and the DMATS-type prenyltransferase fscG performs prenylation, followed by the formation of a chromene ring catalyzed by the oxidoreductase fscI, which leads to desacetylfusarochromene. Epoxidation by fscF and rearrangement reactions of chromene double bonds convert compound desacetylfusarochromene to fusarochromanones. Although specific acetyltransferases were not found near the fsc gene cluster, several predicted enzymes containing the N-acetyltransferase superfamily domain are present in the genome of F.equiseti. These predicted enzymes may have the potential to convert desacetylfusarochromene to fusarochromene. This Fusarium equiseti (Fusarium scirpi) protein is Kynurenine formamidase-like hydrolase fscH.